Consider the following 328-residue polypeptide: Mitochondrial thiamine pyrophosphate carrier 1 (328 aa).

Solcar repeat units lie at residues 12-110 (GTRR…TTQL), 120-208 (PQPI…LRPV), and 221-316 (PPGS…ALKL). Transmembrane regions (helical) follow at residues 17 to 37 (VVLA…PLDV), 79 to 99 (LTGL…YGGI), 126 to 146 (FISG…LDLL), 185 to 205 (SAAV…YEAL), 227 to 247 (AAAG…LDLV), and 291 to 308 (GLTV…VTMW).

It belongs to the mitochondrial carrier (TC 2.A.29) family.

It is found in the mitochondrion inner membrane. Functionally, mitochondrial transporter that mediates uptake of thiamine pyrophosphate (ThPP) into mitochondria. In Emericella nidulans (strain FGSC A4 / ATCC 38163 / CBS 112.46 / NRRL 194 / M139) (Aspergillus nidulans), this protein is Mitochondrial thiamine pyrophosphate carrier 1 (tpc1).